A 225-amino-acid chain; its full sequence is Receptor-transporting protein 2 (225 aa).

Residues 1–196 (MCTSLTTCEW…RAQAGSGYNF (196 aa)) lie on the Cytoplasmic side of the membrane. The 3CxxC-type zinc finger occupies 52–161 (ASGRFHCSWC…AEFCEACQEG (110 aa)). The helical transmembrane segment at 197 to 219 (LSLRWCLFWASLCLLVVYLQFSF) threads the bilayer. Over 220–225 (LSPAFF) the chain is Extracellular.

Belongs to the TMEM7 family. As to quaternary structure, interacts with olfactory receptors. As to expression, expressed in circumvallate papillae and testis.

The protein resides in the cell membrane. In terms of biological role, specifically promotes functional cell surface expression of olfactory receptors, but not of other GPCRs. This Homo sapiens (Human) protein is Receptor-transporting protein 2 (RTP2).